A 236-amino-acid chain; its full sequence is Sorulation-regulated protein 2 (236 aa).

The N-terminal stretch at 1-20 is a signal peptide; that stretch reads MLGLYLSSLFFAFFMAQVFA. Asparagine 155, asparagine 160, asparagine 203, and asparagine 212 each carry an N-linked (GlcNAc...) asparagine glycan. The GPI-anchor amidated asparagine moiety is linked to residue asparagine 212. A propeptide spans 213-236 (removed in mature form); the sequence is SSSSLMPSMGILSFLFGLYLLLHP.

In terms of processing, the GPI-anchor is attached to the protein in the endoplasmic reticulum and serves to target the protein to the cell surface. There, the glucosamine-inositol phospholipid moiety is cleaved off and the GPI-modified mannoprotein is covalently attached via its lipidless GPI glycan remnant to the 1,6-beta-glucan of the outer cell wall layer. N-glycosylated.

The protein resides in the spore wall. Its subcellular location is the secreted. The protein localises to the cell wall. It localises to the membrane. In Saccharomyces cerevisiae (strain ATCC 204508 / S288c) (Baker's yeast), this protein is Sorulation-regulated protein 2.